The chain runs to 1462 residues: Copper-transporting ATPase 2 (1462 aa).

The tract at residues 1 to 23 is disordered; sequence MDPRKNLASVGTMPEQERQVTAK. Topologically, residues 1-655 are cytoplasmic; it reads MDPRKNLASV…KTEIKQWKKS (655 aa). 4 HMA domains span residues 68 to 134, 153 to 219, 267 to 333, and 361 to 427; these read ATDV…FEAS, AVVK…FEAA, ATLP…PGHF, and RTAV…FEVS. 6 residues coordinate Cu(+): C79, C82, C164, C167, C278, and C281. Residues 333 to 361 are disordered; the sequence is FKVSLPDGVEENEPQSGSSQRHQEQGPGR. C372 provides a ligand contact to Cu(+). Positions 460-487 are disordered; that stretch reads KMAPDTRGLPTHQGPGHSSETPSSPGAT. Polar residues predominate over residues 475–487; the sequence is GHSSETPSSPGAT. Residues S478 and S483 each carry the phosphoserine modification. 2 HMA domains span residues 490-556 and 566-632; these read QKCF…FEAS and GDIE…FHAS. Residues C501, C504, C577, and C580 each coordinate Cu(+). A helical transmembrane segment spans residues 656-677; it reads FLCSLVFGIPVMGLMVYMLIPS. The Extracellular portion of the chain corresponds to 678–699; it reads STPQETMVLDHNIIPGLSVLNL. The chain crosses the membrane as a helical span at residues 700-719; the sequence is IFFILCTFVQFLGGWYFYVQ. Residues 720–726 are Cytoplasmic-facing; the sequence is AYKSLRH. A helical transmembrane segment spans residues 727–747; that stretch reads RSANMDVLIVLATTIAYAYSL. Residues 748 to 766 lie on the Extracellular side of the membrane; sequence VILVVAVAEKAEKSPVTFF. A helical membrane pass occupies residues 767 to 787; it reads DTPPMLFVFIALGRWLEHVAK. Topologically, residues 788–921 are cytoplasmic; that stretch reads SKTSEALAKL…KAPIQQLADR (134 aa). Residues 922-944 traverse the membrane as a helical segment; it reads FSGYFVPFIIIISTLTLVVWIVI. The Extracellular portion of the chain corresponds to 945 to 974; sequence GFVDFGVVQKYFPSPSKHISQTEVIIRFAF. Residues 975 to 996 traverse the membrane as a helical segment; that stretch reads QTSITVLCIACPCSLGLATPTA. The Cytoplasmic portion of the chain corresponds to 997–1319; the sequence is VMVGTGVAAQ…LSKRTVRRIR (323 aa). The active-site 4-aspartylphosphate intermediate is D1029. Mg(2+) is bound by residues D1264 and D1268. Residues 1320–1337 traverse the membrane as a helical segment; that stretch reads VNLVLALIYNMVGIPIAA. Residues 1338–1348 lie on the Extracellular side of the membrane; the sequence is GVFMPIGIVLQ. Residues 1349–1368 form a helical membrane-spanning segment; sequence PWMGSAAMAASSVSVVLSSL. Topologically, residues 1369–1462 are cytoplasmic; that stretch reads QLKCYRKPDL…LSDRDEEQCI (94 aa). 2 positions are modified to phosphoserine: S1395 and S1454.

The protein belongs to the cation transport ATPase (P-type) (TC 3.A.3) family. Type IB subfamily. As to quaternary structure, monomer. Interacts with COMMD1/MURR1. Interacts with DCTN4, in a copper-dependent manner. Interacts with ATOX1. Interacts (via C-terminus) with ZBTB16/PLZF. Detected in liver and kidney.

Its subcellular location is the golgi apparatus. It is found in the trans-Golgi network membrane. It localises to the late endosome. It catalyses the reaction Cu(+)(in) + ATP + H2O = Cu(+)(out) + ADP + phosphate + H(+). Copper ion transmembrane transporter involved in the export of copper out of the cells, such as the efflux of hepatic copper into the bile. The protein is Copper-transporting ATPase 2 (Atp7b) of Mus musculus (Mouse).